An 822-amino-acid polypeptide reads, in one-letter code: MNGHISNHPSSFEMYPSQMNGYGSSPTFSQMDREHGSKTSAKALYEQRKNYARDSVSSVSDISQYRVEHLTTFVLDRKDAMITVDDGIRKLKLLDAKGKVWTQDMILQVDDRAVSLIDLESKNELENFPLNTIQHCQAVMHSCSYDSVLALVCKEPTQNKPDLHLFQCDEVKANLISEDIESAISDSKGGKQKRRPDALRMISNADPGIPPPPRAPAPAPPGTVTQVDVRSRVAAWSAWAADQGDFEKPRQYHEQEETPEMMAARIDRDVQILNHILDDIEFFITKLQKAAEAFSELSKRKKNKKGKRKGPGEGVLTLRAKPPPPDEFLDCFQKFKHGFNLLAKLKSHIQNPSAADLVHFLFTPLNMVVQATGGPELASSVLSPLLNKDTIDFLNYTVNGDERQLWMSLGGTWTKARAEWPKEQFIPPYVPRFRNGWEPPMLNFMGATMEQDLYQLAESVANVAEHQRKQEIKRLSTEHSSVSEYHPADGYAFSSNIYTRGSHLDQGEAAVAFKPTSNRHIDRNYEPLKTQPKKYAKSKYDFVARNNSELSVLKDDILEILDDRKQWWKVRNASGDSGFVPNNILDIVRPPESGLGRADPPYTHTIQKQRMEYGPRPADTPPAPSPPPTPAPVPVPLPPSTPAPVPVSKFPANITRQNSSSSDSGGSIVRDSQRHKQLPVDRRKSQMEEVQDELIHRLTIGRSAAQKKFHVPRQNVPVINITYDSTPEDVKTWLQSKGFNPVTVNSLGVLNGAQLFSLNKDELRTVCPEGARVYSQITVQKAALEDSSGSSELQEIMRRRQEKISAAASDSGVESFDEGSSH.

Composition is skewed to polar residues over residues 1-10 (MNGHISNHPS) and 17-30 (SQMNGYGSSPTFSQ). The segment at 1 to 39 (MNGHISNHPSSFEMYPSQMNGYGSSPTFSQMDREHGSKT) is disordered. Residue Ser-58 is modified to Phosphoserine. Residues 64–194 (QYRVEHLTTF…SDSKGGKQKR (131 aa)) form the PTB domain. Disordered regions lie at residues 201–225 (MISNADPGIPPPPRAPAPAPPGTVT) and 298–320 (SKRKKNKKGKRKGPGEGVLTLRA). Pro residues predominate over residues 208–221 (GIPPPPRAPAPAPP). The residue at position 223 (Thr-223) is a Phosphothreonine. Residues 299-309 (KRKKNKKGKRK) show a composition bias toward basic residues. Position 317 is a phosphothreonine (Thr-317). Ser-476 carries the phosphoserine modification. Positions 531-590 (QPKKYAKSKYDFVARNNSELSVLKDDILEILDDRKQWWKVRNASGDSGFVPNNILDIVRP) constitute an SH3 domain. Positions 612–689 (EYGPRPADTP…VDRRKSQMEE (78 aa)) are disordered. The segment covering 618-645 (ADTPPAPSPPPTPAPVPVPLPPSTPAPV) has biased composition (pro residues). Ser-625 carries the post-translational modification Phosphoserine; by MAPK. A Phosphothreonine; by MAPK modification is found at Thr-629. The interval 649 to 822 (KFPANITRQN…VESFDEGSSH (174 aa)) is effector region. 3 positions are modified to phosphoserine: Ser-659, Ser-662, and Ser-685. Over residues 671 to 687 (DSQRHKQLPVDRRKSQM) the composition is skewed to basic and acidic residues. An amphipathic helix region spans residues 680-698 (VDRRKSQMEEVQDELIHRL). Helix bundle regions lie at residues 718-738 (VINITYDSTPEDVKTWLQSKG), 752-757 (GAQLFS), 762-767 (ELRTVC), and 766-785 (VCPEGARVYSQITVQKAALE). The tract at residues 787 to 822 (SSGSSELQEIMRRRQEKISAAASDSGVESFDEGSSH) is disordered. Phosphoserine occurs at positions 811 and 815.

This sequence belongs to the EPS8 family. As to quaternary structure, homodimer. Part of a complex consisting of ABI1, EPS8 and SOS1. Interacts with BAIAP2. Interacts with SHB and LANCL1. Interacts with EGFR; mediates EPS8 phosphorylation. Interacts with MYO15A and WHRN. Post-translationally, ubiquitinated by the SCF(FBXW5) E3 ubiquitin-protein ligase complex during G2 phase, leading to its transient degradation and subsequent cell shape changes required to allow mitotic progression. Reappears at the midzone of dividing cells. Phosphorylation at Ser-625 and Thr-629 by MAPK following BDNF treatment promotes removal from actin and filopodia formation. Phosphorylated by several receptor tyrosine kinases.

Its subcellular location is the cytoplasm. The protein resides in the cell cortex. The protein localises to the cell projection. It is found in the ruffle membrane. It localises to the growth cone. Its subcellular location is the stereocilium. The protein resides in the synapse. The protein localises to the synaptosome. Functionally, signaling adapter that controls various cellular protrusions by regulating actin cytoskeleton dynamics and architecture. Depending on its association with other signal transducers, can regulate different processes. Together with SOS1 and ABI1, forms a trimeric complex that participates in transduction of signals from Ras to Rac by activating the Rac-specific guanine nucleotide exchange factor (GEF) activity. Acts as a direct regulator of actin dynamics by binding actin filaments and has both barbed-end actin filament capping and actin bundling activities depending on the context. Displays barbed-end actin capping activity when associated with ABI1, thereby regulating actin-based motility process: capping activity is auto-inhibited and inhibition is relieved upon ABI1 interaction. Also shows actin bundling activity when associated with BAIAP2, enhancing BAIAP2-dependent membrane extensions and promoting filopodial protrusions. Involved in the regulation of processes such as axonal filopodia growth, stereocilia length, dendritic cell migration and cancer cell migration and invasion. Acts as a regulator of axonal filopodia formation in neurons: in the absence of neurotrophic factors, negatively regulates axonal filopodia formation via actin-capping activity. In contrast, it is phosphorylated in the presence of BDNF leading to inhibition of its actin-capping activity and stimulation of filopodia formation. Component of a complex with WHRN and MYO15A that localizes at stereocilia tips and is required for elongation of the stereocilia actin core. Indirectly involved in cell cycle progression; its degradation following ubiquitination being required during G2 phase to promote cell shape changes. The sequence is that of Epidermal growth factor receptor kinase substrate 8 (EPS8) from Pongo abelii (Sumatran orangutan).